A 140-amino-acid chain; its full sequence is Large ribosomal subunit protein uL11 (140 aa).

Belongs to the universal ribosomal protein uL11 family. In terms of assembly, part of the ribosomal stalk of the 50S ribosomal subunit. Interacts with L10 and the large rRNA to form the base of the stalk. L10 forms an elongated spine to which L12 dimers bind in a sequential fashion forming a multimeric L10(L12)X complex. Post-translationally, one or more lysine residues are methylated.

In terms of biological role, forms part of the ribosomal stalk which helps the ribosome interact with GTP-bound translation factors. The polypeptide is Large ribosomal subunit protein uL11 (Oleidesulfovibrio alaskensis (strain ATCC BAA-1058 / DSM 17464 / G20) (Desulfovibrio alaskensis)).